Consider the following 264-residue polypeptide: GTP cyclohydrolase FolE2 (264 aa).

This sequence belongs to the GTP cyclohydrolase IV family.

The catalysed reaction is GTP + H2O = 7,8-dihydroneopterin 3'-triphosphate + formate + H(+). The protein operates within cofactor biosynthesis; 7,8-dihydroneopterin triphosphate biosynthesis; 7,8-dihydroneopterin triphosphate from GTP: step 1/1. In terms of biological role, converts GTP to 7,8-dihydroneopterin triphosphate. This chain is GTP cyclohydrolase FolE2, found in Nitratidesulfovibrio vulgaris (strain ATCC 29579 / DSM 644 / CCUG 34227 / NCIMB 8303 / VKM B-1760 / Hildenborough) (Desulfovibrio vulgaris).